The sequence spans 623 residues: Chaperone protein DnaK (623 aa).

The segment covering 582 to 603 has biased composition (low complexity); it reads QQQQAAEQAAQQQSGGQQASGS. Residues 582–623 are disordered; it reads QQQQAAEQAAQQQSGGQQASGSNPGKDPNVVDADYEVVNDKK. Positions 614–623 are enriched in acidic residues; the sequence is ADYEVVNDKK.

The protein belongs to the heat shock protein 70 family.

In terms of biological role, acts as a chaperone. The sequence is that of Chaperone protein DnaK from Methanocella arvoryzae (strain DSM 22066 / NBRC 105507 / MRE50).